A 389-amino-acid polypeptide reads, in one-letter code: Aspartyl protease UND (389 aa).

The N-terminal stretch at 1-19 (MKTTMNFVFLFFLPLLINA) is a signal peptide. Residues 58 to 383 (FMAEIHFGSP…DLSAKTAYIN (326 aa)) form the Peptidase A1 domain. Aspartate 76 is a catalytic residue. Cysteine 86 and cysteine 92 are oxidised to a cystine. Asparagine 238 carries an N-linked (GlcNAc...) asparagine glycan. Residue aspartate 268 is part of the active site. A disulfide bridge connects residues cysteine 304 and cysteine 346.

This sequence belongs to the peptidase A1 family.

Its function is as follows. Probable aspartic protease activated by the transcription factor MYB80. May participate in the regulation of the timing of tapetal programmed cell death (PCD) which is critical for pollen development. The polypeptide is Aspartyl protease UND (Arabidopsis thaliana (Mouse-ear cress)).